Here is a 421-residue protein sequence, read N- to C-terminus: Putative bifunctional polynucleotide phosphatase/kinase (421 aa).

The phosphatase stretch occupies residues 25–231; it reads DSYLKGIINN…SENLKTNYKL (207 aa). The interval 235 to 415 is kinase; it reads NPTEIIDEIE…DDPKWKRSFM (181 aa). 265-272 is an ATP binding site; sequence GQPGSGKS.

It in the N-terminal section; belongs to the DNA 3' phosphatase family.

It carries out the reaction a 3'end (2'-deoxyribonucleotide 3'-phosphate)-DNA + H2O = a 3'-end 2'-deoxyribonucleotide-DNA + phosphate. The catalysed reaction is a 5'-end dephospho-2'-deoxyribonucleoside-DNA + ATP = a 5'-end 5'-phospho-2'-deoxyribonucleoside-DNA + ADP + H(+). This Acanthamoeba polyphaga mimivirus (APMV) protein is Putative bifunctional polynucleotide phosphatase/kinase.